Reading from the N-terminus, the 354-residue chain is Mitogen-activated protein kinase kinase 1 (354 aa).

Residues 68-328 enclose the Protein kinase domain; it reads LEVIKVIGKG…AKELLEHKFV (261 aa). ATP is bound by residues 74-82 and K97; that span reads IGKGSSGNV. D190 serves as the catalytic Proton acceptor. T218 carries the post-translational modification Phosphothreonine. Position 224 is a phosphoserine (S224). Phosphothreonine is present on T228.

The protein belongs to the protein kinase superfamily. STE Ser/Thr protein kinase family. MAP kinase kinase subfamily. In terms of assembly, interacts with MEKK1 and MPK4. May form a ternary complex composed of MEKK1 and MKK1/MKK2 and MPK4. Interacts with P.syringae type III effector HopF2. Interacts with MPK11. Phosphorylation at Thr-218 and Ser-224 by MAP kinase kinase kinases positively regulates kinase activity. Expressed in roots, stem, flowers and siliques.

The enzyme catalyses L-seryl-[protein] + ATP = O-phospho-L-seryl-[protein] + ADP + H(+). It carries out the reaction L-threonyl-[protein] + ATP = O-phospho-L-threonyl-[protein] + ADP + H(+). The catalysed reaction is L-tyrosyl-[protein] + ATP = O-phospho-L-tyrosyl-[protein] + ADP + H(+). Its activity is regulated as follows. Activated through serine and threonine phosphorylation in response to wounding, cold, drought, salt stresses, abscisic acid (ABA), hydrogen peroxide, bacterial flagellin and laminarin beta-glucan. In terms of biological role, MEKK1, MKK1/MKK2 and MPK4/MPK6 function in a signaling pathway that modulates the expression of genes responding to biotic and abiotic stresses and also plays an important role in pathogen defense by negatively regulating innate immunity. Activates by phosphorylation the downstream MPK4. Acts redundantly with MKK2. MKK1-MPK6 module mediates abscisic acid (ABA)-dependent CAT1 expression with H(2)O(2) production and response to drought and salt stress. MKK1-MPK6 module is also involved in sugar signaling during the process of seed germination. This chain is Mitogen-activated protein kinase kinase 1 (MKK1), found in Arabidopsis thaliana (Mouse-ear cress).